A 462-amino-acid polypeptide reads, in one-letter code: Cysteine desulfurase, mitochondrial (462 aa).

Residues Ala-132–Thr-133, Asn-212, Gln-240, and Ser-260–His-262 contribute to the pyridoxal 5'-phosphate site. Lys-263 is modified (N6-(pyridoxal phosphate)lysine). Thr-300 contacts pyridoxal 5'-phosphate. Cys-386 (cysteine persulfide intermediate) is an active-site residue. Residue Cys-386 coordinates [2Fe-2S] cluster.

It belongs to the class-V pyridoxal-phosphate-dependent aminotransferase family. NifS/IscS subfamily. In terms of assembly, component of the mitochondrial core iron-sulfur cluster (ISC) assembly complex at least composed of the cystein desulfurase Nfs1, the scaffold protein IscU, the accessory protein bcn92/Isd11/Lyrm4, and probably fh/frataxin. Interacts with bcn92/Isd11/Lyrm4 and IscU. Requires pyridoxal 5'-phosphate as cofactor. Ubiquitous expression at high levels in any life stage.

It localises to the mitochondrion. Its subcellular location is the nucleus. The enzyme catalyses (sulfur carrier)-H + L-cysteine = (sulfur carrier)-SH + L-alanine. Active when in complex with bcn92/Isd11/Lyrm4. L-cysteine binding kinetics are reduced in the presence of bcn92/Isd11/Lyrm4 and IscU. Activity is regulated by other components of the mitochondrial core iron-sulfur cluster (ISC) complex; Activity is reduced in the presence of IscU but enhanced when both IscU and fh/frataxin are present. Catalyzes the removal of elemental sulfur from cysteine to produce alanine. It supplies the inorganic sulfur for iron-sulfur (Fe-S) clusters. This is Cysteine desulfurase, mitochondrial from Drosophila melanogaster (Fruit fly).